We begin with the raw amino-acid sequence, 289 residues long: Probable aquaporin PIP-type 7a (289 aa).

The interval 1 to 39 (MEAKEQDVSLGANKFPERQPLGIAAQSQDEPKDYQEPPP) is disordered. The Cytoplasmic segment spans residues 1-57 (MEAKEQDVSLGANKFPERQPLGIAAQSQDEPKDYQEPPPAPLFEPSELTSWSFYRAG). The helical transmembrane segment at 58–78 (IAEFIATFLFLYITVLTVMGV) threads the bilayer. The Extracellular segment spans residues 79 to 91 (VRESSKCKTVGIQ). A helical membrane pass occupies residues 92-112 (GIAWAFGGMIFALVYCTAGIS). At 113–135 (GGHINPAVTFGLFLARKLSLTRA) the chain is on the cytoplasmic side. The NPA 1 signature appears at 117–119 (NPA). Residues 136–156 (IFYMVMQVLGAICGAGVVKGF) traverse the membrane as a helical segment. The Extracellular portion of the chain corresponds to 157–178 (EGKQRFGDLNGGANFVAPGYTK). A helical transmembrane segment spans residues 179–199 (GDGLGAEIVGTFILVYTVFSA). Residues 200–212 (TDAKRSARDSHVP) are Cytoplasmic-facing. The helical transmembrane segment at 213 to 233 (ILAPLPIGFAVFLVHLATIPI) threads the bilayer. Over 234-260 (TGTGINPARSLGAAIVFNKKIGWNDHW) the chain is Extracellular. An NPA 2 motif is present at residues 239–241 (NPA). A helical transmembrane segment spans residues 261 to 281 (IFWVGPFIGAALAALYHQVVI). Residues 282–289 (RAIPFKSK) lie on the Cytoplasmic side of the membrane.

Belongs to the MIP/aquaporin (TC 1.A.8) family. PIP (TC 1.A.8.11) subfamily.

The protein resides in the cell membrane. Aquaporins facilitate the transport of water and small neutral solutes across cell membranes. This Pisum sativum (Garden pea) protein is Probable aquaporin PIP-type 7a (TRG-31).